Here is a 568-residue protein sequence, read N- to C-terminus: Peptidoglycan D,D-transpeptidase FtsI (568 aa).

A helical membrane pass occupies residues 19–39; it reads FVTLCSIVFLFLVILTLRIIF. The active-site Acyl-ester intermediate is Ser-302.

Belongs to the transpeptidase family. FtsI subfamily.

It localises to the cell inner membrane. It catalyses the reaction Preferential cleavage: (Ac)2-L-Lys-D-Ala-|-D-Ala. Also transpeptidation of peptidyl-alanyl moieties that are N-acyl substituents of D-alanine.. It participates in cell wall biogenesis; peptidoglycan biosynthesis. Functionally, catalyzes cross-linking of the peptidoglycan cell wall at the division septum. The polypeptide is Peptidoglycan D,D-transpeptidase FtsI (Buchnera aphidicola subsp. Schizaphis graminum (strain Sg)).